A 369-amino-acid chain; its full sequence is Homoserine O-succinyltransferase (369 aa).

The 280-residue stretch at 49 to 328 (NAVFICHALT…RFDSTQSARM (280 aa)) folds into the AB hydrolase-1 domain. The Nucleophile role is filled by S154. R224 is a binding site for substrate. Active-site residues include D317 and H350. Residue D351 coordinates substrate.

It belongs to the AB hydrolase superfamily. MetX family. Homodimer.

The protein resides in the cytoplasm. The enzyme catalyses L-homoserine + succinyl-CoA = O-succinyl-L-homoserine + CoA. The protein operates within amino-acid biosynthesis; L-methionine biosynthesis via de novo pathway; O-succinyl-L-homoserine from L-homoserine: step 1/1. Transfers a succinyl group from succinyl-CoA to L-homoserine, forming succinyl-L-homoserine. This chain is Homoserine O-succinyltransferase, found in Nocardioides sp. (strain ATCC BAA-499 / JS614).